The following is a 339-amino-acid chain: DNA-directed RNA polymerase subunit alpha (339 aa).

Residues 1-233 (MVREEITGST…DLFLPFLHTE (233 aa)) are alpha N-terminal domain (alpha-NTD). Residues 264-339 (KKGIPLNCIF…IDLPKNKFSL (76 aa)) form an alpha C-terminal domain (alpha-CTD) region.

The protein belongs to the RNA polymerase alpha chain family. In plastids the minimal PEP RNA polymerase catalytic core is composed of four subunits: alpha, beta, beta', and beta''. When a (nuclear-encoded) sigma factor is associated with the core the holoenzyme is formed, which can initiate transcription.

It localises to the plastid. Its subcellular location is the chloroplast. The catalysed reaction is RNA(n) + a ribonucleoside 5'-triphosphate = RNA(n+1) + diphosphate. Its function is as follows. DNA-dependent RNA polymerase catalyzes the transcription of DNA into RNA using the four ribonucleoside triphosphates as substrates. In Zea mays (Maize), this protein is DNA-directed RNA polymerase subunit alpha.